The chain runs to 144 residues: Nucleoside diphosphate kinase (144 aa).

6 residues coordinate ATP: Lys11, Phe59, Arg87, Thr93, Arg104, and Asn114. The Pros-phosphohistidine intermediate role is filled by His117.

This sequence belongs to the NDK family. As to quaternary structure, homotetramer. Mg(2+) serves as cofactor.

The protein localises to the cytoplasm. It carries out the reaction a 2'-deoxyribonucleoside 5'-diphosphate + ATP = a 2'-deoxyribonucleoside 5'-triphosphate + ADP. The enzyme catalyses a ribonucleoside 5'-diphosphate + ATP = a ribonucleoside 5'-triphosphate + ADP. Its function is as follows. Major role in the synthesis of nucleoside triphosphates other than ATP. The ATP gamma phosphate is transferred to the NDP beta phosphate via a ping-pong mechanism, using a phosphorylated active-site intermediate. The protein is Nucleoside diphosphate kinase of Aliivibrio fischeri (strain ATCC 700601 / ES114) (Vibrio fischeri).